Consider the following 517-residue polypeptide: Cytochrome P450 monooxygenase 124 (517 aa).

Residues 3–23 (SLLVLFVSLLALGALKKHLDF) traverse the membrane as a helical segment. Residue Cys453 participates in heme binding.

Belongs to the cytochrome P450 family. Heme serves as cofactor.

The protein localises to the membrane. It participates in secondary metabolite biosynthesis. Functionally, cytochrome P450 monooxygenase that is able to use trans-stilbene as a substrate for oxidation. This Postia placenta (strain ATCC 44394 / Madison 698-R) (Brown rot fungus) protein is Cytochrome P450 monooxygenase 124.